Consider the following 132-residue polypeptide: Small ribosomal subunit protein uS8 (132 aa).

The protein belongs to the universal ribosomal protein uS8 family. Part of the 30S ribosomal subunit. Contacts proteins S5 and S12.

One of the primary rRNA binding proteins, it binds directly to 16S rRNA central domain where it helps coordinate assembly of the platform of the 30S subunit. The sequence is that of Small ribosomal subunit protein uS8 from Bacillus velezensis (strain DSM 23117 / BGSC 10A6 / LMG 26770 / FZB42) (Bacillus amyloliquefaciens subsp. plantarum).